Reading from the N-terminus, the 105-residue chain is Cell division topological specificity factor (105 aa).

It belongs to the MinE family.

In terms of biological role, prevents the cell division inhibition by proteins MinC and MinD at internal division sites while permitting inhibition at polar sites. This ensures cell division at the proper site by restricting the formation of a division septum at the midpoint of the long axis of the cell. The sequence is that of Cell division topological specificity factor from Prochlorococcus marinus (strain MIT 9515).